Consider the following 122-residue polypeptide: Ig heavy chain V region M603 (122 aa).

An Ig-like domain is found at 1–121 (EVKLVESGGG…WGAGTTVTVS (121 aa)).

In Mus musculus (Mouse), this protein is Ig heavy chain V region M603.